A 197-amino-acid chain; its full sequence is Orotate phosphoribosyltransferase (197 aa).

5-phospho-alpha-D-ribose 1-diphosphate is bound by residues Arg-87, Lys-91, His-93, and 112–120 (DDVATTGGS). Positions 116 and 144 each coordinate orotate.

The protein belongs to the purine/pyrimidine phosphoribosyltransferase family. PyrE subfamily. Homodimer. It depends on Mg(2+) as a cofactor.

It carries out the reaction orotidine 5'-phosphate + diphosphate = orotate + 5-phospho-alpha-D-ribose 1-diphosphate. It functions in the pathway pyrimidine metabolism; UMP biosynthesis via de novo pathway; UMP from orotate: step 1/2. Catalyzes the transfer of a ribosyl phosphate group from 5-phosphoribose 1-diphosphate to orotate, leading to the formation of orotidine monophosphate (OMP). In Sulfolobus acidocaldarius (strain ATCC 33909 / DSM 639 / JCM 8929 / NBRC 15157 / NCIMB 11770), this protein is Orotate phosphoribosyltransferase.